A 415-amino-acid chain; its full sequence is Erythronolide mycarosyltransferase (415 aa).

The protein belongs to the glycosyltransferase 28 family.

It catalyses the reaction dTDP-beta-L-mycarose + erythronolide B = 3-O-alpha-L-mycarosylerythronolide B + dTDP + H(+). Its function is as follows. Involved in the biosynthesis of the macrolide antibiotic erythromycin. Catalyzes the reversible transfer of mycarosyl from dTDP-beta-L-mycarose to erythronolide B to yield 3-alpha-L-mycarosylerythronolide B. It can also use TDP-beta-L-cladinose. The polypeptide is Erythronolide mycarosyltransferase (Saccharopolyspora erythraea (Streptomyces erythraeus)).